A 92-amino-acid chain; its full sequence is Acylphosphatase (92 aa).

The 86-residue stretch at 7–92 folds into the Acylphosphatase-like domain; it reads KTRCTISGRV…DPAPAEFSVG (86 aa). Catalysis depends on residues arginine 22 and asparagine 40.

It belongs to the acylphosphatase family.

The enzyme catalyses an acyl phosphate + H2O = a carboxylate + phosphate + H(+). The chain is Acylphosphatase (acyP) from Halorhodospira halophila (strain DSM 244 / SL1) (Ectothiorhodospira halophila (strain DSM 244 / SL1)).